A 348-amino-acid polypeptide reads, in one-letter code: UDP-3-O-acylglucosamine N-acyltransferase (348 aa).

Catalysis depends on histidine 243, which acts as the Proton acceptor.

This sequence belongs to the transferase hexapeptide repeat family. LpxD subfamily. In terms of assembly, homotrimer.

The enzyme catalyses a UDP-3-O-[(3R)-3-hydroxyacyl]-alpha-D-glucosamine + a (3R)-hydroxyacyl-[ACP] = a UDP-2-N,3-O-bis[(3R)-3-hydroxyacyl]-alpha-D-glucosamine + holo-[ACP] + H(+). Its pathway is bacterial outer membrane biogenesis; LPS lipid A biosynthesis. Catalyzes the N-acylation of UDP-3-O-acylglucosamine using 3-hydroxyacyl-ACP as the acyl donor. Is involved in the biosynthesis of lipid A, a phosphorylated glycolipid that anchors the lipopolysaccharide to the outer membrane of the cell. This is UDP-3-O-acylglucosamine N-acyltransferase from Hahella chejuensis (strain KCTC 2396).